The following is a 535-amino-acid chain: Peptide chain release factor 3 (535 aa).

One can recognise a tr-type G domain in the interval 8 to 278; it reads ARRRTFAIIS…VDQAPAPGPR (271 aa). GTP-binding positions include 17 to 24, 85 to 89, and 139 to 142; these read SHPDAGKT, DTPGH, and NKLD.

The protein belongs to the TRAFAC class translation factor GTPase superfamily. Classic translation factor GTPase family. PrfC subfamily.

The protein resides in the cytoplasm. In terms of biological role, increases the formation of ribosomal termination complexes and stimulates activities of RF-1 and RF-2. It binds guanine nucleotides and has strong preference for UGA stop codons. It may interact directly with the ribosome. The stimulation of RF-1 and RF-2 is significantly reduced by GTP and GDP, but not by GMP. This chain is Peptide chain release factor 3, found in Bordetella parapertussis (strain 12822 / ATCC BAA-587 / NCTC 13253).